The following is a 440-amino-acid chain: Cobyrinate a,c-diamide synthase (440 aa).

The region spanning 247 to 428 (RIAIAYDAAF…MHLYFPSNPR (182 aa)) is the GATase cobBQ-type domain. Cysteine 329 functions as the Nucleophile in the catalytic mechanism.

It belongs to the CobB/CbiA family. Mg(2+) serves as cofactor.

The catalysed reaction is cob(II)yrinate + 2 L-glutamine + 2 ATP + 2 H2O = cob(II)yrinate a,c diamide + 2 L-glutamate + 2 ADP + 2 phosphate + 2 H(+). It functions in the pathway cofactor biosynthesis; adenosylcobalamin biosynthesis; cob(II)yrinate a,c-diamide from sirohydrochlorin (anaerobic route): step 10/10. Its function is as follows. Catalyzes the ATP-dependent amidation of the two carboxylate groups at positions a and c of cobyrinate, using either L-glutamine or ammonia as the nitrogen source. This chain is Cobyrinate a,c-diamide synthase, found in Picrophilus torridus (strain ATCC 700027 / DSM 9790 / JCM 10055 / NBRC 100828 / KAW 2/3).